Consider the following 406-residue polypeptide: Cysteine desulfurase (406 aa).

Lys226 is modified (N6-(pyridoxal phosphate)lysine). Cys364 functions as the Cysteine persulfide intermediate in the catalytic mechanism.

It belongs to the class-V pyridoxal-phosphate-dependent aminotransferase family. Csd subfamily. As to quaternary structure, homodimer. Interacts with SufE and the SufBCD complex composed of SufB, SufC and SufD. The interaction with SufE is required to mediate the direct transfer of the sulfur atom from the S-sulfanylcysteine. The cofactor is pyridoxal 5'-phosphate.

The protein localises to the cytoplasm. The catalysed reaction is (sulfur carrier)-H + L-cysteine = (sulfur carrier)-SH + L-alanine. The enzyme catalyses L-selenocysteine + AH2 = hydrogenselenide + L-alanine + A + H(+). The protein operates within cofactor biosynthesis; iron-sulfur cluster biosynthesis. Its function is as follows. Cysteine desulfurases mobilize the sulfur from L-cysteine to yield L-alanine, an essential step in sulfur metabolism for biosynthesis of a variety of sulfur-containing biomolecules. Component of the suf operon, which is activated and required under specific conditions such as oxidative stress and iron limitation. Acts as a potent selenocysteine lyase in vitro, that mobilizes selenium from L-selenocysteine. Selenocysteine lyase activity is however unsure in vivo. The protein is Cysteine desulfurase of Escherichia coli O127:H6 (strain E2348/69 / EPEC).